We begin with the raw amino-acid sequence, 490 residues long: Transcription factor lin-26 (490 aa).

Disordered stretches follow at residues 96–176 (KYKD…PLHQ), 236–262 (TPEY…EPDS), and 302–326 (ASKP…KKHR). The tract at residues 101-110 (SSSPESPSTT) is PEST. A compositionally biased stretch (low complexity) spans 101–120 (SSSPESPSTTASTAAQHTPP). Polar residues-rich tracts occupy residues 123-132 (AVSTPTSINT) and 151-176 (NLST…PLHQ). Basic and acidic residues predominate over residues 236-260 (TPEYDDNHHSETISKASSEDLKTEP). The C2H2-type; degenerate zinc finger occupies 353 to 381 (YKCALCGKPTTLNSTGSRWNLLRHVIMIH).

As to expression, expressed in somatic gonads and germline precursors until the 50-cell stage. After the 100-cell stage, expression is seen in differentiating hypodermal and support cells (at protein level).

Its subcellular location is the nucleus. In terms of biological role, probable transcription factor. Required to specify the fates of hypodermal and neuron-associated support cells. Functions during vulval development, playing a role in vulval precursor cell fate specification. Positively modulates expression of homeobox protein lin-39, perhaps by binding to regulatory regions of the lin-39 gene, acting in the vulval lineage. In Caenorhabditis elegans, this protein is Transcription factor lin-26.